The sequence spans 816 residues: Phosphatidylinositol 4-kinase beta (816 aa).

A disordered region spans residues methionine 1–leucine 30. At glycine 2 the chain carries N-acetylglycine. Residues glycine 2–isoleucine 68 form an interaction with ACBD3 region. One can recognise a PIK helical domain in the interval cysteine 52 to serine 242. The segment at alanine 248–serine 318 is disordered. Serine 258 is subject to Phosphoserine. Threonine 263 is modified (phosphothreonine). Phosphoserine is present on residues serine 266, serine 275, serine 277, serine 284, and serine 294. Composition is skewed to polar residues over residues aspartate 278–lysine 297 and serine 306–serine 318. Serine 428 bears the Phosphoserine mark. Threonine 438 is modified (phosphothreonine). Serine 511 carries the post-translational modification Phosphoserine. Residues threonine 517 and threonine 519 each carry the phosphothreonine modification. One can recognise a PI3K/PI4K catalytic domain in the interval glutamate 535–threonine 801. The interval valine 541 to glycine 547 is G-loop. The interval glutamine 668–asparagine 676 is catalytic loop. The activation loop stretch occupies residues histidine 687–threonine 711.

Belongs to the PI3/PI4-kinase family. Type III PI4K subfamily. Interacts with ARF1 and ARF3 in the Golgi complex, but not with ARF4, ARF5 or ARF6. Interacts with NCS1/FREQ in a calcium-independent manner. Interacts with CALN1/CABP8 and CALN2/CABP7; in a calcium-dependent manner; this interaction competes with NCS1/FREQ binding. Interacts with ACBD3. Interacts with ARMH3, YWHAB, YWHAE, YWHAG, YWHAH, YWHAQ, YWHAZ and SFN. Interacts with GGA2 (via VHS domain); the interaction is important for PI4KB location at the Golgi apparatus membrane. Interacts with ATG9A. Mg(2+) serves as cofactor. The cofactor is Mn(2+).

It is found in the endomembrane system. Its subcellular location is the mitochondrion outer membrane. The protein localises to the rough endoplasmic reticulum membrane. It localises to the golgi apparatus. The protein resides in the golgi apparatus membrane. It carries out the reaction a 1,2-diacyl-sn-glycero-3-phospho-(1D-myo-inositol) + ATP = a 1,2-diacyl-sn-glycero-3-phospho-(1D-myo-inositol 4-phosphate) + ADP + H(+). With respect to regulation, inhibited by wortmannin. Increased kinase activity upon interaction with NCS1/FREQ. Functionally, phosphorylates phosphatidylinositol (PI) in the first committed step in the production of the second messenger inositol-1,4,5,-trisphosphate (PIP). May regulate Golgi disintegration/reorganization during mitosis, possibly via its phosphorylation. Involved in Golgi-to-plasma membrane trafficking. May play an important role in the inner ear development. In Otolemur garnettii (Small-eared galago), this protein is Phosphatidylinositol 4-kinase beta (PI4KB).